A 552-amino-acid polypeptide reads, in one-letter code: Glycosyltransferase family 92 protein RCOM_0530710 (552 aa).

A helical; Signal-anchor membrane pass occupies residues Trp12–Phe34. Residues Lys277–Trp520 enclose the GT92 domain.

The protein belongs to the glycosyltransferase 92 family.

The protein localises to the membrane. The protein is Glycosyltransferase family 92 protein RCOM_0530710 of Ricinus communis (Castor bean).